The following is a 125-amino-acid chain: Ly6/PLAUR domain-containing protein 2 (125 aa).

The first 22 residues, 1–22 (MRGTRLALLALVLAACGELAPA), serve as a signal peptide directing secretion. In terms of domain architecture, UPAR/Ly6 spans 25–100 (CYVCPEPTGV…VSCCNTELCN (76 aa)). N-linked (GlcNAc...) asparagine glycosylation occurs at N46. G103 carries the GPI-anchor amidated glycine lipid modification. The propeptide at 104 to 125 (APALNSLHCGALTLLPLLSLRL) is removed in mature form.

Its subcellular location is the cell membrane. This is Ly6/PLAUR domain-containing protein 2 (LYPD2) from Homo sapiens (Human).